The sequence spans 358 residues: Alanine racemase (358 aa).

The active-site Proton acceptor; specific for D-alanine is lysine 35. Lysine 35 carries the post-translational modification N6-(pyridoxal phosphate)lysine. Residue arginine 130 coordinates substrate. The active-site Proton acceptor; specific for L-alanine is tyrosine 255. Methionine 303 serves as a coordination point for substrate.

The protein belongs to the alanine racemase family. Requires pyridoxal 5'-phosphate as cofactor.

It carries out the reaction L-alanine = D-alanine. It participates in amino-acid biosynthesis; D-alanine biosynthesis; D-alanine from L-alanine: step 1/1. Its function is as follows. Catalyzes the interconversion of L-alanine and D-alanine. May also act on other amino acids. This chain is Alanine racemase (alr), found in Shewanella sp. (strain W3-18-1).